Reading from the N-terminus, the 373-residue chain is Response regulator aspartate phosphatase J (373 aa).

TPR repeat units follow at residues 99-135 (YYFY…VEDE) and 146-179 (AEVY…GRRR). Glu147, Tyr150, Gln181, Asp192, Tyr217, Asn225, His228, Gln260, Tyr297, Lys300, and Asp335 together coordinate L-glutamyl-L-arginyl-glycyl-L-methionyl-L-threonine. 2 TPR repeats span residues 220–253 (AAAY…FEEH) and 259–292 (VQAV…AAEW). One copy of the TPR 5 repeat lies at 334 to 367 (EDLLHDTAERFNQLEHYESAAFFYRRLMNIKKKL).

Belongs to the Rap family. Monomer in solution. Homodimer.

It is found in the cytoplasm. With respect to regulation, inhibited in vitro by the competence and sporulation stimulating factor (CSF), encoded by phrC. However, CSF has at least three targets (RapB, RapC, and RapJ) and the physiological importance of RapJ inhibition by CSF is unknown. Interaction with CSF induces a conformational change in RapJ. Its function is as follows. Involved in the regulation of sporulation. Acts as a phosphatase that specifically dephosphorylates the sporulation initiation phosphotransferase Spo0F and inhibits its activity. The sequence is that of Response regulator aspartate phosphatase J (rapJ) from Bacillus subtilis (strain 168).